A 151-amino-acid polypeptide reads, in one-letter code: Globin CTT-VIII (151 aa).

Residues 4–148 (PMSADQLALF…MFFYILHALE (145 aa)) form the Globin domain. Heme b is bound by residues H62 and H97.

This sequence belongs to the globin family. As to quaternary structure, homodimer.

In Chironomus thummi thummi (Midge), this protein is Globin CTT-VIII (CTT-8).